Here is a 327-residue protein sequence, read N- to C-terminus: ATPase ASNA1 homolog (327 aa).

Lysine 26–threonine 33 serves as a coordination point for ATP. Residue aspartate 57 is part of the active site. Glutamate 238 and asparagine 265 together coordinate ATP. Residues cysteine 274 and cysteine 277 each contribute to the Zn(2+) site.

Belongs to the arsA ATPase family. In terms of assembly, homodimer.

It is found in the cytoplasm. The protein resides in the endoplasmic reticulum. Functionally, ATPase required for the post-translational delivery of tail-anchored (TA) proteins to the endoplasmic reticulum. Recognizes and selectively binds the transmembrane domain of TA proteins in the cytosol. This complex then targets to the endoplasmic reticulum by membrane-bound receptors, where the tail-anchored protein is released for insertion. This process is regulated by ATP binding and hydrolysis. ATP binding drives the homodimer towards the closed dimer state, facilitating recognition of newly synthesized TA membrane proteins. ATP hydrolysis is required for insertion. Subsequently, the homodimer reverts towards the open dimer state, lowering its affinity for the membrane-bound receptor, and returning it to the cytosol to initiate a new round of targeting. In Entamoeba dispar (strain ATCC PRA-260 / SAW760), this protein is ATPase ASNA1 homolog.